The chain runs to 146 residues: MKLHELYPAEGSRKVRNRVGRGAATGNGKTSGRGQKGQKARSGGKVRPGFEGGQLPLFRRLPKRGFTNINRKEFAVVNLEQLNRFEEGTEVTPELLIETGVVKNAKAGIKVLGNGSLEKKLTVKAHNFSASAAEAIDAKGGAHEVI.

The segment covering 1 to 13 (MKLHELYPAEGSR) has biased composition (basic and acidic residues). Residues 1 to 55 (MKLHELYPAEGSRKVRNRVGRGAATGNGKTSGRGQKGQKARSGGKVRPGFEGGQL) are disordered. Residues 23–35 (AATGNGKTSGRGQ) show a composition bias toward gly residues.

Belongs to the universal ribosomal protein uL15 family. As to quaternary structure, part of the 50S ribosomal subunit.

Binds to the 23S rRNA. This Staphylococcus carnosus (strain TM300) protein is Large ribosomal subunit protein uL15.